Reading from the N-terminus, the 277-residue chain is Ribosomal RNA small subunit methyltransferase A (277 aa).

Residues Asn-27, Leu-29, Gly-54, Glu-75, Asp-95, and Asn-118 each coordinate S-adenosyl-L-methionine.

The protein belongs to the class I-like SAM-binding methyltransferase superfamily. rRNA adenine N(6)-methyltransferase family. RsmA subfamily.

Its subcellular location is the cytoplasm. The catalysed reaction is adenosine(1518)/adenosine(1519) in 16S rRNA + 4 S-adenosyl-L-methionine = N(6)-dimethyladenosine(1518)/N(6)-dimethyladenosine(1519) in 16S rRNA + 4 S-adenosyl-L-homocysteine + 4 H(+). Specifically dimethylates two adjacent adenosines (A1518 and A1519) in the loop of a conserved hairpin near the 3'-end of 16S rRNA in the 30S particle. May play a critical role in biogenesis of 30S subunits. This Chlamydia muridarum (strain MoPn / Nigg) protein is Ribosomal RNA small subunit methyltransferase A.